The sequence spans 313 residues: Ribose-phosphate pyrophosphokinase (313 aa).

ATP-binding positions include 40-42 and 98-99; these read DGE and RQ. Positions 132 and 172 each coordinate Mg(2+). Lysine 195 is an active-site residue. Residues arginine 197, aspartate 221, and 225–229 contribute to the D-ribose 5-phosphate site; that span reads DTAGT.

This sequence belongs to the ribose-phosphate pyrophosphokinase family. Class I subfamily. In terms of assembly, homohexamer. Mg(2+) serves as cofactor.

Its subcellular location is the cytoplasm. The enzyme catalyses D-ribose 5-phosphate + ATP = 5-phospho-alpha-D-ribose 1-diphosphate + AMP + H(+). The protein operates within metabolic intermediate biosynthesis; 5-phospho-alpha-D-ribose 1-diphosphate biosynthesis; 5-phospho-alpha-D-ribose 1-diphosphate from D-ribose 5-phosphate (route I): step 1/1. Its function is as follows. Involved in the biosynthesis of the central metabolite phospho-alpha-D-ribosyl-1-pyrophosphate (PRPP) via the transfer of pyrophosphoryl group from ATP to 1-hydroxyl of ribose-5-phosphate (Rib-5-P). This Porphyromonas gingivalis (strain ATCC BAA-308 / W83) protein is Ribose-phosphate pyrophosphokinase.